A 233-amino-acid polypeptide reads, in one-letter code: 7-cyano-7-deazaguanine synthase (233 aa).

13–23 (LSGGLDSTTCL) provides a ligand contact to ATP. Positions 197, 206, 209, and 212 each coordinate Zn(2+).

It belongs to the QueC family. Zn(2+) serves as cofactor.

It carries out the reaction 7-carboxy-7-deazaguanine + NH4(+) + ATP = 7-cyano-7-deazaguanine + ADP + phosphate + H2O + H(+). Its pathway is purine metabolism; 7-cyano-7-deazaguanine biosynthesis. Its function is as follows. Catalyzes the ATP-dependent conversion of 7-carboxy-7-deazaguanine (CDG) to 7-cyano-7-deazaguanine (preQ(0)). This is 7-cyano-7-deazaguanine synthase from Anaeromyxobacter sp. (strain Fw109-5).